The sequence spans 1128 residues: Probable serine/threonine-protein kinase DDB_G0283337 (1128 aa).

A compositionally biased stretch (low complexity) spans 1 to 17; the sequence is MENNNNNNINKTNTPNN. 5 disordered regions span residues 1 to 21, 60 to 100, 131 to 151, 236 to 256, and 375 to 504; these read MENNNNNNINKTNTPNNSFSP, INHN…NNNN, RESNSNNNSNNSNININNNSN, NNSKEDCNSSNNSYDNDSNSN, and NDNE…NSEQ. Low complexity-rich tracts occupy residues 243–256 and 375–502; these read NSSNNSYDNDSNSN and NDNE…NNNS. The region spanning 777–1054 is the Protein kinase domain; that stretch reads LSDFSIIGEG…EIQKCKEEYE (278 aa). Residues 783–791 and Lys809 each bind ATP; that span reads IGEGGFSTV. The active-site Proton acceptor is Asp904.

The protein belongs to the protein kinase superfamily. Ser/Thr protein kinase family.

The catalysed reaction is L-seryl-[protein] + ATP = O-phospho-L-seryl-[protein] + ADP + H(+). The enzyme catalyses L-threonyl-[protein] + ATP = O-phospho-L-threonyl-[protein] + ADP + H(+). The chain is Probable serine/threonine-protein kinase DDB_G0283337 from Dictyostelium discoideum (Social amoeba).